The primary structure comprises 378 residues: UDP-4-amino-4-deoxy-L-arabinose--oxoglutarate aminotransferase (378 aa).

The residue at position 182 (lysine 182) is an N6-(pyridoxal phosphate)lysine.

Belongs to the DegT/DnrJ/EryC1 family. ArnB subfamily. As to quaternary structure, homodimer. Pyridoxal 5'-phosphate is required as a cofactor.

The enzyme catalyses UDP-4-amino-4-deoxy-beta-L-arabinose + 2-oxoglutarate = UDP-beta-L-threo-pentopyranos-4-ulose + L-glutamate. The protein operates within nucleotide-sugar biosynthesis; UDP-4-deoxy-4-formamido-beta-L-arabinose biosynthesis; UDP-4-deoxy-4-formamido-beta-L-arabinose from UDP-alpha-D-glucuronate: step 2/3. It functions in the pathway bacterial outer membrane biogenesis; lipopolysaccharide biosynthesis. In terms of biological role, catalyzes the conversion of UDP-4-keto-arabinose (UDP-Ara4O) to UDP-4-amino-4-deoxy-L-arabinose (UDP-L-Ara4N). The modified arabinose is attached to lipid A and is required for resistance to polymyxin and cationic antimicrobial peptides. The sequence is that of UDP-4-amino-4-deoxy-L-arabinose--oxoglutarate aminotransferase from Aeromonas salmonicida (strain A449).